Consider the following 240-residue polypeptide: Uridylate kinase (240 aa).

Position 13–16 (13–16 (KFSG)) interacts with ATP. Gly-55 contributes to the UMP binding site. The ATP site is built by Gly-56 and Arg-60. UMP contacts are provided by residues Asp-76 and 137–144 (TGNPFFTT). Positions 164, 170, and 173 each coordinate ATP.

The protein belongs to the UMP kinase family. In terms of assembly, homohexamer.

The protein resides in the cytoplasm. The catalysed reaction is UMP + ATP = UDP + ADP. It functions in the pathway pyrimidine metabolism; CTP biosynthesis via de novo pathway; UDP from UMP (UMPK route): step 1/1. With respect to regulation, inhibited by UTP. Functionally, catalyzes the reversible phosphorylation of UMP to UDP. This is Uridylate kinase from Helicobacter acinonychis (strain Sheeba).